The sequence spans 838 residues: uncharacterized protein (838 aa).

This is an uncharacterized protein from Rickettsia conorii (strain ATCC VR-613 / Malish 7).